The following is a 213-amino-acid chain: MATPAVSGLSRQVRCFSTSVVRPFAKLVRPPVQVYGIEGRYATALYSAASKQNKLEQVEKELLRVAQILKEPKVAAPVLNPYVKRSIKVKSLNDITAKERFSPLTTNLINLLAENGRLSNTQGVVSAFSTMMSAHRGEVPCTVTSASPLEEATLSELKTVLKSFLSQGQVLKLEAKTDPSILGGMIVRIGEKYVDMSVKTKIQKLSRAMRETA.

The transit peptide at 1-23 (MATPAVSGLSRQVRCFSTSVVRP) directs the protein to the mitochondrion. An SIFI-degron motif is present at residues 5-23 (AVSGLSRQVRCFSTSVVRP). N6-acetyllysine occurs at positions 54, 60, 70, and 73. The residue at position 90 (lysine 90) is an N6-succinyllysine. An N6-acetyllysine; alternate mark is found at lysine 158 and lysine 162. N6-succinyllysine; alternate is present on residues lysine 158 and lysine 162. N6-acetyllysine is present on residues lysine 172, lysine 176, and lysine 192. Residue lysine 199 is modified to N6-succinyllysine.

It belongs to the ATPase delta chain family. As to quaternary structure, component of the ATP synthase complex composed at least of ATP5F1A/subunit alpha, ATP5F1B/subunit beta, ATP5MC1/subunit c (homooctomer), MT-ATP6/subunit a, MT-ATP8/subunit 8, ATP5ME/subunit e, ATP5MF/subunit f, ATP5MG/subunit g, ATP5MK/subunit k, ATP5MJ/subunit j, ATP5F1C/subunit gamma, ATP5F1D/subunit delta, ATP5F1E/subunit epsilon, ATP5PF/subunit F6, ATP5PB/subunit b, ATP5PD/subunit d, ATP5PO/subunit OSCP. ATP synthase complex consists of a soluble F(1) head domain (subunits alpha(3) and beta(3)) - the catalytic core - and a membrane F(0) domain - the membrane proton channel (subunits c, a, 8, e, f, g, k and j). These two domains are linked by a central stalk (subunits gamma, delta, and epsilon) rotating inside the F1 region and a stationary peripheral stalk (subunits F6, b, d, and OSCP). In terms of processing, acetylation at Lys-162 decreases ATP production. Deacetylated by SIRT3. In response to mitochondrial stress, the precursor protein is ubiquitinated by the SIFI complex in the cytoplasm before mitochondrial import, leading to its degradation. Within the SIFI complex, UBR4 initiates ubiquitin chain that are further elongated or branched by KCMF1.

Its subcellular location is the mitochondrion. The protein localises to the mitochondrion inner membrane. Its function is as follows. Subunit OSCP, of the mitochondrial membrane ATP synthase complex (F(1)F(0) ATP synthase or Complex V) that produces ATP from ADP in the presence of a proton gradient across the membrane which is generated by electron transport complexes of the respiratory chain. ATP synthase complex consist of a soluble F(1) head domain - the catalytic core - and a membrane F(1) domain - the membrane proton channel. These two domains are linked by a central stalk rotating inside the F(1) region and a stationary peripheral stalk. During catalysis, ATP synthesis in the catalytic domain of F(1) is coupled via a rotary mechanism of the central stalk subunits to proton translocation. In vivo, can only synthesize ATP although its ATP hydrolase activity can be activated artificially in vitro. Part of the complex F(0) domain. Part of the complex F(0) domain and the peripheric stalk, which acts as a stator to hold the catalytic alpha(3)beta(3) subcomplex and subunit a/ATP6 static relative to the rotary elements. In Pongo abelii (Sumatran orangutan), this protein is ATP synthase peripheral stalk subunit OSCP, mitochondrial.